Reading from the N-terminus, the 665-residue chain is MTFCDENNLDLIKKDLRYLKLLANQYPNISSASTEIVNLEAILNLPKSTEHFLSDIHGEYESFTHVLKNASGVIKRKIDDVFGNSLRDNEKLTLATVIYYPEQKLELIKQSEKDLSDWYKITLYRLIELCRVVSSKYTRSKVRKALPHDFAYIIEELLHEHDGTINKHEYYNGIVSTIIDIDRAPEFITAISKVIQRLVVDRLHIIGDIYDRGPGAEIIMEELMKHHSVDIQWGNHDILWMGAAAGSEACICNVLRISLRYANLNTIEDGYGINLLPLATFAMDVYENDPCNSFIPKTINKELTQNELNLISKMHKAIAIIQFKLQGQIIKNHPEFKMDDQLLLDKINYEKGTIDLDGHIYKLNDTFFPTVDPKDPYKLTENEDDLIKKLTRSFVNSEKLQRHIRFMYSKGSMYLVYNSNLLYHGCVPLNEDGTFKEITIDGVRYSGKSLLDKFDSLAREAFFFKNGSSAKRFALDMMWYLWCGPNSPEFGKLRMTTLERYFIDDKGTHIEYRNPYYKYRSNEKVVTNILKEFGLDPDCSHVINGHIPVKTKAGENPIKANGKLLVIDGGFCRAYQPETGIAGYTLIYNSYGLLLSSHEPFSSIRKAIEEEKDILSSTIILEQVVSRKRVADTDIGKELKKQIAELKMLLIAYRKGLIKEQDSKS.

This sequence belongs to the FBPase class 3 family. The cofactor is Mn(2+).

It catalyses the reaction beta-D-fructose 1,6-bisphosphate + H2O = beta-D-fructose 6-phosphate + phosphate. The protein operates within carbohydrate biosynthesis; gluconeogenesis. This is Fructose-1,6-bisphosphatase class 3 from Clostridium novyi (strain NT).